A 244-amino-acid chain; its full sequence is Thaumatin-like protein 1 (244 aa).

A signal peptide spans 1 to 22; that stretch reads MKFEALIGLVLVFLSEHAGVYS. Intrachain disulfides connect Cys31-Cys243, Cys79-Cys89, Cys94-Cys101, Cys149-Cys232, Cys154-Cys215, Cys162-Cys178, Cys182-Cys191, and Cys192-Cys202. An N-linked (GlcNAc...) asparagine glycan is attached at Asn150.

Belongs to the thaumatin family. In terms of processing, N-glycosylated. As to expression, style.

The protein localises to the secreted. This is Thaumatin-like protein 1 (TL1) from Pyrus pyrifolia (Chinese pear).